A 262-amino-acid polypeptide reads, in one-letter code: Aminoglycoside (3'') (9) adenylyltransferase (262 aa).

The catalysed reaction is streptomycin + ATP = 3''-O-adenylylstreptomycin + diphosphate. It carries out the reaction spectinomycin + ATP = 9-O-adenylylspectinomycin + diphosphate. In terms of biological role, mediates bacterial resistance to the antibiotics streptomycin and spectinomycin. The protein is Aminoglycoside (3'') (9) adenylyltransferase of Klebsiella pneumoniae.